We begin with the raw amino-acid sequence, 290 residues long: MASLRDLKRQIQSVKNIAKVTDALQAVSAVKFRKAEARVKQARPYAENMEEVMRAIASKASTRNPMLAGREQVRRVAVATLTSDRGLCGSFNAQVLRRTVRFREQQGAEALQVASGRKGIAFFRFRRIGLAESYSGFTDDPSYEDAQRIGRGLTRLFEREEADEVYLVYNRFVNPAVQRPVVVRLLPAAPEGGEEGEGGTVSGAPFDFIPDADTILRRLIPQYVETLVWQALLESAAGEHGARMTAMKNATDNANELVDTLTLQMNKARQAQITREISEIAAGAEALAAG.

Belongs to the ATPase gamma chain family. In terms of assembly, F-type ATPases have 2 components, CF(1) - the catalytic core - and CF(0) - the membrane proton channel. CF(1) has five subunits: alpha(3), beta(3), gamma(1), delta(1), epsilon(1). CF(0) has three main subunits: a, b and c.

The protein localises to the cell membrane. Functionally, produces ATP from ADP in the presence of a proton gradient across the membrane. The gamma chain is believed to be important in regulating ATPase activity and the flow of protons through the CF(0) complex. The protein is ATP synthase gamma chain of Rubrobacter xylanophilus (strain DSM 9941 / JCM 11954 / NBRC 16129 / PRD-1).